A 316-amino-acid polypeptide reads, in one-letter code: tRNA dimethylallyltransferase (316 aa).

ATP is bound at residue 17 to 24; the sequence is GPTASGKT. 19–24 serves as a coordination point for substrate; sequence TASGKT. 4 interaction with substrate tRNA regions span residues 42-45, 166-170, 247-252, and 280-287; these read DSAL, QRLSR, RCVGYR, and KRQITWLR.

The protein belongs to the IPP transferase family. As to quaternary structure, monomer. It depends on Mg(2+) as a cofactor.

It catalyses the reaction adenosine(37) in tRNA + dimethylallyl diphosphate = N(6)-dimethylallyladenosine(37) in tRNA + diphosphate. Functionally, catalyzes the transfer of a dimethylallyl group onto the adenine at position 37 in tRNAs that read codons beginning with uridine, leading to the formation of N6-(dimethylallyl)adenosine (i(6)A). The polypeptide is tRNA dimethylallyltransferase (Escherichia coli O127:H6 (strain E2348/69 / EPEC)).